A 299-amino-acid chain; its full sequence is Probable lipid kinase YegS (299 aa).

A DAGKc domain is found at 2–133 (AEFPASLLIL…IDMAQVNKQT (132 aa)). Residues Thr-40, 66 to 72 (GDGTINE), and Thr-95 each bind ATP. Residues Leu-215, Asp-218, and Leu-220 each contribute to the Mg(2+) site. Glu-271 serves as the catalytic Proton acceptor.

The protein belongs to the diacylglycerol/lipid kinase family. YegS lipid kinase subfamily. It depends on Mg(2+) as a cofactor. Requires Ca(2+) as cofactor.

Its subcellular location is the cytoplasm. Probably phosphorylates lipids; the in vivo substrate is unknown. This chain is Probable lipid kinase YegS, found in Shigella dysenteriae serotype 1 (strain Sd197).